Consider the following 210-residue polypeptide: MAKKGLLGRKIGMTQVFADNGVAVPVTVVQAGPCVVVQKKTVEKDGYEAVQIGFGDVREKLLNKPKRGHLKNAGVRLVRVLREIKVDSMDEYKVGQELKADVFSAGEYVDVVGTSKGKGFAGGIKRHNFKRGPMKHGSKYHRRPGSAGAKGPARIFKGRKMPGRMGNERVTVQKLQVVRVDAERNLLLIKGAVPGPKRGLLLIKSSIKAK.

Basic residues predominate over residues 132–144; that stretch reads GPMKHGSKYHRRP. Residues 132–152 form a disordered region; the sequence is GPMKHGSKYHRRPGSAGAKGP.

It belongs to the universal ribosomal protein uL3 family. In terms of assembly, part of the 50S ribosomal subunit. Forms a cluster with proteins L14 and L19.

In terms of biological role, one of the primary rRNA binding proteins, it binds directly near the 3'-end of the 23S rRNA, where it nucleates assembly of the 50S subunit. This Heliobacterium modesticaldum (strain ATCC 51547 / Ice1) protein is Large ribosomal subunit protein uL3.